An 89-amino-acid polypeptide reads, in one-letter code: Small ribosomal subunit protein uS15 (89 aa).

The protein belongs to the universal ribosomal protein uS15 family. As to quaternary structure, part of the 30S ribosomal subunit. Forms a bridge to the 50S subunit in the 70S ribosome, contacting the 23S rRNA.

One of the primary rRNA binding proteins, it binds directly to 16S rRNA where it helps nucleate assembly of the platform of the 30S subunit by binding and bridging several RNA helices of the 16S rRNA. In terms of biological role, forms an intersubunit bridge (bridge B4) with the 23S rRNA of the 50S subunit in the ribosome. The chain is Small ribosomal subunit protein uS15 from Trichodesmium erythraeum (strain IMS101).